The sequence spans 319 residues: Probable carboxylesterase 5 (319 aa).

M1 bears the N-acetylmethionine mark. Residues 79-81 (HGG) carry the Involved in the stabilization of the negatively charged intermediate by the formation of the oxyanion hole motif. Residues S163, D262, and H294 contribute to the active site.

The protein belongs to the 'GDXG' lipolytic enzyme family. Expressed in roots, leaves, stems, flowers and siliques.

It carries out the reaction a carboxylic ester + H2O = an alcohol + a carboxylate + H(+). Carboxylesterase acting on esters with varying acyl chain length. The polypeptide is Probable carboxylesterase 5 (CXE5) (Arabidopsis thaliana (Mouse-ear cress)).